The sequence spans 448 residues: D-inositol 3-phosphate glycosyltransferase (448 aa).

The tract at residues 1–21 (MAEQHTGVGRQRGARPWPRPR) is disordered. His29 is a 1D-myo-inositol 3-phosphate binding site. Residues 35 to 36 (QP) and Gly43 each bind UDP-N-acetyl-alpha-D-glucosamine. 1D-myo-inositol 3-phosphate-binding positions include 40-45 (DAGGMN), Lys98, Tyr131, Thr155, and Arg175. Residues Arg255, Lys260, and Gln321 each contribute to the UDP-N-acetyl-alpha-D-glucosamine site. Residues Tyr330, Arg331, and Ala333 each coordinate Mg(2+). Glu343 and Glu351 together coordinate UDP-N-acetyl-alpha-D-glucosamine. Thr357 contacts Mg(2+).

It belongs to the glycosyltransferase group 1 family. MshA subfamily. As to quaternary structure, homodimer.

It carries out the reaction 1D-myo-inositol 3-phosphate + UDP-N-acetyl-alpha-D-glucosamine = 1D-myo-inositol 2-acetamido-2-deoxy-alpha-D-glucopyranoside 3-phosphate + UDP + H(+). In terms of biological role, catalyzes the transfer of a N-acetyl-glucosamine moiety to 1D-myo-inositol 3-phosphate to produce 1D-myo-inositol 2-acetamido-2-deoxy-glucopyranoside 3-phosphate in the mycothiol biosynthesis pathway. This chain is D-inositol 3-phosphate glycosyltransferase, found in Salinispora arenicola (strain CNS-205).